Here is a 380-residue protein sequence, read N- to C-terminus: Flagellar P-ring protein (380 aa).

Positions 1 to 35 (MRFFTQSPFPLRTLTRRLTAFVCVGLLLLPGFTLA) are cleaved as a signal peptide.

It belongs to the FlgI family. In terms of assembly, the basal body constitutes a major portion of the flagellar organelle and consists of four rings (L,P,S, and M) mounted on a central rod.

Its subcellular location is the periplasm. It localises to the bacterial flagellum basal body. In terms of biological role, assembles around the rod to form the L-ring and probably protects the motor/basal body from shearing forces during rotation. This is Flagellar P-ring protein from Gluconobacter oxydans (strain 621H) (Gluconobacter suboxydans).